The primary structure comprises 67 residues: Small ribosomal subunit protein bS21 (67 aa).

Belongs to the bacterial ribosomal protein bS21 family.

The sequence is that of Small ribosomal subunit protein bS21 from Magnetococcus marinus (strain ATCC BAA-1437 / JCM 17883 / MC-1).